The primary structure comprises 82 residues: Small ribosomal subunit protein bS16 (82 aa).

Belongs to the bacterial ribosomal protein bS16 family.

This Photorhabdus laumondii subsp. laumondii (strain DSM 15139 / CIP 105565 / TT01) (Photorhabdus luminescens subsp. laumondii) protein is Small ribosomal subunit protein bS16.